We begin with the raw amino-acid sequence, 587 residues long: Ankyrin repeat and SOCS box protein 14 (587 aa).

11 ANK repeats span residues 81–110 (NGWLPLHKAAVQLNKNILEITMNASEPSTW), 116–145 (NGETALFLAVSSSLLENAHFLLLKGCNPNA), 149–178 (EGNSPLLTAVLKDAYDMATLLISHGADVNL), 182–211 (NERTALHEAAKLGRLDMVKLMLASGAYPDA), 215–244 (YGFTPLALAAQGGHTGIMQLLLQKGADVHS), 248–277 (DSSSVLLEAVRGGNPEAVSLLLEYGADANI), 281–310 (SGHLPIHVAADKGHFLALKVLVPVTDIAAI), 313–342 (SGISPVHCAAAGAHPHCLELLIQAGFDVNF), 355–384 (QRKSALYFAVSNGDLPSVKLLLSAGALPNQ), 385–414 (DPVNCLQIALRMGNYELISLLLRHGANVNY), and 416–449 (CRVNPLHFPSALQYTLKDEVMLRMLLNYGYDTER). In terms of domain architecture, SOCS box spans 521–576 (WPEIHFILANPRSLQHLCRLKIRKCMGRLRLRCPVFMSFLPLPNLLKAYVLYKEYD).

Belongs to the ankyrin SOCS box (ASB) family. In terms of assembly, interacts with MAPRE2; this interaction promotes MAPRE2 degradation.

The protein operates within protein modification; protein ubiquitination. Its function is as follows. May be a substrate-recognition component of a SCF-like ECS (Elongin-Cullin-SOCS-box protein) E3 ubiquitin-protein ligase complex which mediates the ubiquitination and subsequent proteasomal degradation of target proteins. Plays a role in the inhibition of cardiomyocyte nuclear proliferation by mediating the ubiquitination and degradation of MAPRE2. In Mus musculus (Mouse), this protein is Ankyrin repeat and SOCS box protein 14 (Asb14).